The chain runs to 77 residues: uncharacterized protein (77 aa).

A run of 2 helical transmembrane segments spans residues 22–42 (VFAN…LPVG) and 44–64 (LIGL…FFLG).

It localises to the cell membrane. This is an uncharacterized protein from Methanocaldococcus jannaschii (strain ATCC 43067 / DSM 2661 / JAL-1 / JCM 10045 / NBRC 100440) (Methanococcus jannaschii).